Consider the following 647-residue polypeptide: 1-deoxy-D-xylulose-5-phosphate synthase (647 aa).

Residues His-74 and 115 to 117 contribute to the thiamine diphosphate site; that span reads GHS. Asp-146 is a binding site for Mg(2+). Thiamine diphosphate-binding positions include 147–148, Asn-175, Tyr-286, and Glu-367; that span reads GA. Mg(2+) is bound at residue Asn-175.

The protein belongs to the transketolase family. DXPS subfamily. In terms of assembly, homodimer. It depends on Mg(2+) as a cofactor. Requires thiamine diphosphate as cofactor.

The enzyme catalyses D-glyceraldehyde 3-phosphate + pyruvate + H(+) = 1-deoxy-D-xylulose 5-phosphate + CO2. Its pathway is metabolic intermediate biosynthesis; 1-deoxy-D-xylulose 5-phosphate biosynthesis; 1-deoxy-D-xylulose 5-phosphate from D-glyceraldehyde 3-phosphate and pyruvate: step 1/1. In terms of biological role, catalyzes the acyloin condensation reaction between C atoms 2 and 3 of pyruvate and glyceraldehyde 3-phosphate to yield 1-deoxy-D-xylulose-5-phosphate (DXP). The polypeptide is 1-deoxy-D-xylulose-5-phosphate synthase (Heliobacterium modesticaldum (strain ATCC 51547 / Ice1)).